A 225-amino-acid chain; its full sequence is NAD(P)H-quinone oxidoreductase subunit K, chloroplastic (225 aa).

[4Fe-4S] cluster-binding residues include cysteine 43, cysteine 44, cysteine 108, and cysteine 139.

Belongs to the complex I 20 kDa subunit family. In terms of assembly, NDH is composed of at least 16 different subunits, 5 of which are encoded in the nucleus. It depends on [4Fe-4S] cluster as a cofactor.

It is found in the plastid. Its subcellular location is the chloroplast thylakoid membrane. The enzyme catalyses a plastoquinone + NADH + (n+1) H(+)(in) = a plastoquinol + NAD(+) + n H(+)(out). It carries out the reaction a plastoquinone + NADPH + (n+1) H(+)(in) = a plastoquinol + NADP(+) + n H(+)(out). NDH shuttles electrons from NAD(P)H:plastoquinone, via FMN and iron-sulfur (Fe-S) centers, to quinones in the photosynthetic chain and possibly in a chloroplast respiratory chain. The immediate electron acceptor for the enzyme in this species is believed to be plastoquinone. Couples the redox reaction to proton translocation, and thus conserves the redox energy in a proton gradient. The polypeptide is NAD(P)H-quinone oxidoreductase subunit K, chloroplastic (Draba nemorosa (Woodland whitlowgrass)).